A 340-amino-acid polypeptide reads, in one-letter code: Methionine import ATP-binding protein MetN (340 aa).

One can recognise an ABC transporter domain in the interval 5–243 (IEFRGVTKSF…PQTTTARRFV (239 aa)). 40–47 (GYSGAGKS) contributes to the ATP binding site.

Belongs to the ABC transporter superfamily. Methionine importer (TC 3.A.1.24) family. The complex is composed of two ATP-binding proteins (MetN), two transmembrane proteins (MetI) and a solute-binding protein (MetQ).

It localises to the cell membrane. The catalysed reaction is L-methionine(out) + ATP + H2O = L-methionine(in) + ADP + phosphate + H(+). It catalyses the reaction D-methionine(out) + ATP + H2O = D-methionine(in) + ADP + phosphate + H(+). In terms of biological role, part of the ABC transporter complex MetNIQ involved in methionine import. Responsible for energy coupling to the transport system. This Leifsonia xyli subsp. xyli (strain CTCB07) protein is Methionine import ATP-binding protein MetN.